Reading from the N-terminus, the 582-residue chain is Semenogelin-2 (582 aa).

An N-terminal signal peptide occupies residues M1–G23. Disordered stretches follow at residues K25–I65, H91–S157, L171–S192, N272–Q366, and S393–V557. Positions G50–S59 are enriched in basic and acidic residues. The span at Q111–Q134 shows a compositional bias: basic residues. Polar residues-rich tracts occupy residues H137–S157 and E174–S192. Positions T293–P310 are enriched in basic and acidic residues. The span at K325–Q335 shows a compositional bias: polar residues. Composition is skewed to basic and acidic residues over residues D336–K345, T353–Q366, D396–K405, and T413–Q426. Composition is skewed to polar residues over residues K427–Q437 and K445–Q455. Positions D456–K465 are enriched in basic and acidic residues. 2 stretches are compositionally biased toward polar residues: residues K487–T498 and S506–K529. The span at S530–Y546 shows a compositional bias: basic and acidic residues. The span at Q547–V557 shows a compositional bias: polar residues.

This sequence belongs to the semenogelin family. In terms of assembly, interacts with SERPINA5.

The protein localises to the secreted. Functionally, participates in the formation of a gel matrix (sperm coagulum) entrapping the accessory gland secretions and ejaculated spermatozoa. The protein is Semenogelin-2 (SEMG2) of Colobus guereza (Mantled guereza).